The sequence spans 284 residues: UTP--glucose-1-phosphate uridylyltransferase (284 aa).

It belongs to the UDPGP type 2 family.

The enzyme catalyses alpha-D-glucose 1-phosphate + UTP + H(+) = UDP-alpha-D-glucose + diphosphate. The chain is UTP--glucose-1-phosphate uridylyltransferase (celA) from Komagataeibacter xylinus (Gluconacetobacter xylinus).